The primary structure comprises 671 residues: DNA ligase (671 aa).

Residues 36–40 (DHVYD), 85–86 (SM), and E115 each bind NAD(+). The N6-AMP-lysine intermediate role is filled by K117. NAD(+) is bound by residues R138, E172, K287, and K311. Zn(2+) is bound by residues C405, C408, C423, and C428. Positions 588-671 (AADNFFKGKT…SKIEEKDTEK (84 aa)) constitute a BRCT domain.

The protein belongs to the NAD-dependent DNA ligase family. LigA subfamily. Requires Mg(2+) as cofactor. Mn(2+) is required as a cofactor.

The catalysed reaction is NAD(+) + (deoxyribonucleotide)n-3'-hydroxyl + 5'-phospho-(deoxyribonucleotide)m = (deoxyribonucleotide)n+m + AMP + beta-nicotinamide D-nucleotide.. Functionally, DNA ligase that catalyzes the formation of phosphodiester linkages between 5'-phosphoryl and 3'-hydroxyl groups in double-stranded DNA using NAD as a coenzyme and as the energy source for the reaction. It is essential for DNA replication and repair of damaged DNA. This is DNA ligase from Lactobacillus delbrueckii subsp. bulgaricus (strain ATCC 11842 / DSM 20081 / BCRC 10696 / JCM 1002 / NBRC 13953 / NCIMB 11778 / NCTC 12712 / WDCM 00102 / Lb 14).